The following is a 427-amino-acid chain: Serine protease HTRA2, mitochondrial (427 aa).

Positions 33-55 are disordered; that stretch reads HTASSSKGSGGDNSKDKENNGQN. Residues 66 to 86 form a helical membrane-spanning segment; that stretch reads SAFQFCVPFSLGALVSAVLIE. An IAP-binding motif is present at residues 78-81; that stretch reads ALVS. Positions 144 to 307 are serine protease; that stretch reads SNGSGFVIEQ…IPIDYVKVFL (164 aa). Active-site charge relay system residues include H162, D194, and S271. A PDZ domain is found at 330 to 415; the sequence is MGITMLTLTP…DLEIVILRGV (86 aa).

It belongs to the peptidase S1C family. In terms of assembly, interacts with th/DIAP1 (via BIR 2 domain).

Its subcellular location is the mitochondrion intermembrane space. It is found in the mitochondrion membrane. The catalysed reaction is Cleavage of non-polar aliphatic amino-acids at the P1 position, with a preference for Val, Ile and Met. At the P2 and P3 positions, Arg is selected most strongly with a secondary preference for other hydrophilic residues.. Serine protease that shows proteolytic activity against a non-specific substrate beta-casein. Promotes or induces cell death either by direct binding to and inhibition of BIRC proteins (also called inhibitor of apoptosis proteins, IAPs), leading to an increase in caspase activity, or by a BIRC inhibition-independent, caspase-independent and serine protease activity-dependent mechanism. Can antagonize antiapoptotic activity of th/Diap1 by directly inducing the degradation of th/Diap1. In Drosophila pseudoobscura pseudoobscura (Fruit fly), this protein is Serine protease HTRA2, mitochondrial.